The primary structure comprises 106 residues: Probable NADP-dependent dehydrogenase in aabA 3'region (106 aa).

Residue 4–28 (LITGASSGFGWEAAKLCVAKGHRVI) participates in NADP(+) binding.

It belongs to the short-chain dehydrogenases/reductases (SDR) family.

This Dichelobacter nodosus (Bacteroides nodosus) protein is Probable NADP-dependent dehydrogenase in aabA 3'region.